The primary structure comprises 459 residues: Putrescine aminotransferase (459 aa).

Pyridoxal 5'-phosphate-binding positions include 150–151 (GT) and Q274. An N6-(pyridoxal phosphate)lysine modification is found at K300. Position 332 (T332) interacts with pyridoxal 5'-phosphate.

It belongs to the class-III pyridoxal-phosphate-dependent aminotransferase family. Putrescine aminotransferase subfamily. Requires pyridoxal 5'-phosphate as cofactor.

The enzyme catalyses an alkane-alpha,omega-diamine + 2-oxoglutarate = an omega-aminoaldehyde + L-glutamate. It catalyses the reaction putrescine + 2-oxoglutarate = 1-pyrroline + L-glutamate + H2O. The catalysed reaction is cadaverine + 2-oxoglutarate = 5-aminopentanal + L-glutamate. It participates in amine and polyamine degradation; putrescine degradation; 4-aminobutanal from putrescine (transaminase route): step 1/1. In terms of biological role, catalyzes the aminotransferase reaction from putrescine to 2-oxoglutarate, leading to glutamate and 4-aminobutanal, which spontaneously cyclizes to form 1-pyrroline. This is the first step in one of two pathways for putrescine degradation, where putrescine is converted into 4-aminobutanoate (gamma-aminobutyrate or GABA) via 4-aminobutanal. Also functions as a cadaverine transaminase in a a L-lysine degradation pathway to succinate that proceeds via cadaverine, glutarate and L-2-hydroxyglutarate. This chain is Putrescine aminotransferase, found in Escherichia coli O6:H1 (strain CFT073 / ATCC 700928 / UPEC).